The chain runs to 209 residues: Thiamine-phosphate synthase (209 aa).

Residues 36–40 (QYRDK) and Asn68 contribute to the 4-amino-2-methyl-5-(diphosphooxymethyl)pyrimidine site. Asp69 and Asp87 together coordinate Mg(2+). A 4-amino-2-methyl-5-(diphosphooxymethyl)pyrimidine-binding site is contributed by Thr106. Residue 133 to 135 (SST) coordinates 2-[(2R,5Z)-2-carboxy-4-methylthiazol-5(2H)-ylidene]ethyl phosphate. Lys136 is a 4-amino-2-methyl-5-(diphosphooxymethyl)pyrimidine binding site. Residue Gly163 participates in 2-[(2R,5Z)-2-carboxy-4-methylthiazol-5(2H)-ylidene]ethyl phosphate binding.

The protein belongs to the thiamine-phosphate synthase family. Mg(2+) serves as cofactor.

It carries out the reaction 2-[(2R,5Z)-2-carboxy-4-methylthiazol-5(2H)-ylidene]ethyl phosphate + 4-amino-2-methyl-5-(diphosphooxymethyl)pyrimidine + 2 H(+) = thiamine phosphate + CO2 + diphosphate. The enzyme catalyses 2-(2-carboxy-4-methylthiazol-5-yl)ethyl phosphate + 4-amino-2-methyl-5-(diphosphooxymethyl)pyrimidine + 2 H(+) = thiamine phosphate + CO2 + diphosphate. It catalyses the reaction 4-methyl-5-(2-phosphooxyethyl)-thiazole + 4-amino-2-methyl-5-(diphosphooxymethyl)pyrimidine + H(+) = thiamine phosphate + diphosphate. It functions in the pathway cofactor biosynthesis; thiamine diphosphate biosynthesis; thiamine phosphate from 4-amino-2-methyl-5-diphosphomethylpyrimidine and 4-methyl-5-(2-phosphoethyl)-thiazole: step 1/1. In terms of biological role, condenses 4-methyl-5-(beta-hydroxyethyl)thiazole monophosphate (THZ-P) and 2-methyl-4-amino-5-hydroxymethyl pyrimidine pyrophosphate (HMP-PP) to form thiamine monophosphate (TMP). In Azotobacter vinelandii (strain DJ / ATCC BAA-1303), this protein is Thiamine-phosphate synthase.